Reading from the N-terminus, the 262-residue chain is Cytochrome c oxidase subunit 3 (262 aa).

7 consecutive transmembrane segments (helical) span residues 16–36 (PWPL…VQWF), 42–59 (TLFL…YQWW), 83–103 (GMIL…WAFF), 128–148 (FQIP…VTWA), 163–183 (SLFF…YEYI), 198–218 (FFVA…FLLI), and 240–260 (AWYW…IYWW).

The protein belongs to the cytochrome c oxidase subunit 3 family. As to quaternary structure, component of the cytochrome c oxidase (complex IV, CIV), a multisubunit enzyme composed of a catalytic core of 3 subunits and several supernumerary subunits. The complex exists as a monomer or a dimer and forms supercomplexes (SCs) in the inner mitochondrial membrane with ubiquinol-cytochrome c oxidoreductase (cytochrome b-c1 complex, complex III, CIII).

It is found in the mitochondrion inner membrane. The enzyme catalyses 4 Fe(II)-[cytochrome c] + O2 + 8 H(+)(in) = 4 Fe(III)-[cytochrome c] + 2 H2O + 4 H(+)(out). Its function is as follows. Component of the cytochrome c oxidase, the last enzyme in the mitochondrial electron transport chain which drives oxidative phosphorylation. The respiratory chain contains 3 multisubunit complexes succinate dehydrogenase (complex II, CII), ubiquinol-cytochrome c oxidoreductase (cytochrome b-c1 complex, complex III, CIII) and cytochrome c oxidase (complex IV, CIV), that cooperate to transfer electrons derived from NADH and succinate to molecular oxygen, creating an electrochemical gradient over the inner membrane that drives transmembrane transport and the ATP synthase. Cytochrome c oxidase is the component of the respiratory chain that catalyzes the reduction of oxygen to water. Electrons originating from reduced cytochrome c in the intermembrane space (IMS) are transferred via the dinuclear copper A center (CU(A)) of subunit 2 and heme A of subunit 1 to the active site in subunit 1, a binuclear center (BNC) formed by heme A3 and copper B (CU(B)). The BNC reduces molecular oxygen to 2 water molecules using 4 electrons from cytochrome c in the IMS and 4 protons from the mitochondrial matrix. This is Cytochrome c oxidase subunit 3 from Aedes aegypti (Yellowfever mosquito).